Consider the following 173-residue polypeptide: Lens fiber membrane intrinsic protein (173 aa).

Residues 1–3 (MYS) are Cytoplasmic-facing. The chain crosses the membrane as a helical span at residues 4 to 24 (FMGGGLFCAWVGTILLVVATA). Residues 25-66 (TDHWMQYRLSGSFAHQGLWRYCLGNKCFLQTESIAYWNATRA) lie on the Extracellular side of the membrane. Residues tryptophan 43 and tryptophan 61 are each glycosylated (C-linked (Man) tryptophan). A glycan (N-linked (GlcNAc...) asparagine) is linked at asparagine 62. The helical transmembrane segment at 67 to 87 (FMILSALCATSGIIMGVLAFA) threads the bilayer. Topologically, residues 88 to 98 (QQSTFTRLSRP) are cytoplasmic. A helical transmembrane segment spans residues 99-119 (FSAGIMFFASTLFVLLALAIY). Over 120-140 (TGVTVSFLGRRFGDWRFSWSY) the chain is Extracellular. Residues 141-161 (ILGWVALLMTFFAGIFYMCAY) form a helical membrane-spanning segment. Topologically, residues 162–173 (RMHECRRLATPR) are cytoplasmic. At threonine 171 the chain carries Phosphothreonine.

The protein belongs to the PMP-22/EMP/MP20 family. In terms of assembly, seems to be associated with itself or another lens membrane component via disulfide bonds.

Its subcellular location is the membrane. Functionally, present in the thicker 16-17 nm junctions of mammalian lens fiber cells, where it may contribute to cell junctional organization. Acts as a receptor for calmodulin. May play an important role in both lens development and cataractogenesis. The sequence is that of Lens fiber membrane intrinsic protein (Lim2) from Mus musculus (Mouse).